The chain runs to 362 residues: Flagellar P-ring protein (362 aa).

A signal peptide spans 1-18 (MKHIALIVLYFLSFSVQA).

It belongs to the FlgI family. In terms of assembly, the basal body constitutes a major portion of the flagellar organelle and consists of four rings (L,P,S, and M) mounted on a central rod.

It is found in the periplasm. It localises to the bacterial flagellum basal body. Functionally, assembles around the rod to form the L-ring and probably protects the motor/basal body from shearing forces during rotation. This is Flagellar P-ring protein from Marinomonas sp. (strain MWYL1).